The following is a 319-amino-acid chain: Acetyl-coenzyme A carboxylase carboxyl transferase subunit alpha (319 aa).

The CoA carboxyltransferase C-terminal domain maps to 34–295 (ELEEEVSKLK…KVRLKRDLAD (262 aa)).

This sequence belongs to the AccA family. In terms of assembly, acetyl-CoA carboxylase is a heterohexamer composed of biotin carboxyl carrier protein (AccB), biotin carboxylase (AccC) and two subunits each of ACCase subunit alpha (AccA) and ACCase subunit beta (AccD).

The protein localises to the cytoplasm. The enzyme catalyses N(6)-carboxybiotinyl-L-lysyl-[protein] + acetyl-CoA = N(6)-biotinyl-L-lysyl-[protein] + malonyl-CoA. The protein operates within lipid metabolism; malonyl-CoA biosynthesis; malonyl-CoA from acetyl-CoA: step 1/1. Its function is as follows. Component of the acetyl coenzyme A carboxylase (ACC) complex. First, biotin carboxylase catalyzes the carboxylation of biotin on its carrier protein (BCCP) and then the CO(2) group is transferred by the carboxyltransferase to acetyl-CoA to form malonyl-CoA. In Pseudoalteromonas translucida (strain TAC 125), this protein is Acetyl-coenzyme A carboxylase carboxyl transferase subunit alpha.